A 416-amino-acid chain; its full sequence is RNA-editing ligase 2, mitochondrial (416 aa).

The N-terminal 17 residues, methionine 1 to phenylalanine 17, are a transit peptide targeting the mitochondrion. Residues threonine 29 to isoleucine 31, glutamate 56 to asparagine 62, arginine 79, glutamate 126, phenylalanine 173, and lysine 269 to lysine 271 contribute to the ATP site. The N6-AMP-lysine intermediate role is filled by lysine 57.

Belongs to the RNA ligase 2 family. Component of the RNA editing complex, a 1600 kDa complex composed of at least 20 proteins.

It is found in the mitochondrion. It catalyses the reaction ATP + (ribonucleotide)n-3'-hydroxyl + 5'-phospho-(ribonucleotide)m = (ribonucleotide)n+m + AMP + diphosphate.. Its function is as follows. RNA editing in kinetoplastid mitochondria inserts and deletes uridylates at multiple sites in pre-mRNAs as directed by guide RNAs. This is RNA-editing ligase 2, mitochondrial (REL2) from Trypanosoma brucei brucei (strain 927/4 GUTat10.1).